The primary structure comprises 144 residues: Actin-associated protein FAM107A (144 aa).

Residues 67 to 94 (LQRVLEHRRRNQLIKKKKEELEAKRLQC) are a coiled coil. Residues 74 to 84 (RRRNQLIKKKK) carry the Nuclear localization signal motif. The disordered stretch occupies residues 105–124 (QRLNQLEKPPEKEEDHAPEF). Residues 112–124 (KPPEKEEDHAPEF) are compositionally biased toward basic and acidic residues.

Belongs to the FAM107 family. As to quaternary structure, interacts with ACTB. Interacts with COMMD1; this interaction stabilizes COMMD1 in the nucleus. Interacts with MAP1A. Interacts with PRDX1. Interacts with F-actin.

It localises to the nucleus. Its subcellular location is the cytoplasm. The protein resides in the cytoskeleton. It is found in the stress fiber. The protein localises to the cell junction. It localises to the focal adhesion. Its subcellular location is the cell projection. The protein resides in the ruffle membrane. It is found in the synapse. In terms of biological role, stress-inducible actin-binding protein that plays a role in synaptic and cognitive functions by modulating actin filamentous (F-actin) dynamics. Mediates polymerization of globular actin to F-actin. Also binds to, stabilizes and bundles F-actin. Involved in synaptic function by regulating neurite outgrowth in an actin-dependent manner and for the acquisition of hippocampus-dependent cognitive function, such as learning and long-term memory. Plays a role in the actin and microtubule cytoskeleton organization; negatively regulates focal adhesion (FA) assembly promoting malignant glial cell migration in an actin-, microtubule- and MAP1A-dependent manner. Also involved in neuroblastoma G1/S phase cell cycle progression and cell proliferation inhibition by stimulating ubiquitination of NF-kappa-B subunit RELA and NF-kappa-B degradation in a COMMD1- and actin-dependent manner. May play a role in tumor development. The sequence is that of Actin-associated protein FAM107A (FAM107A) from Pan troglodytes (Chimpanzee).